Consider the following 216-residue polypeptide: MRSGCVVVHVWILAGLWLAVAGRPLAFSDAGPHVHYGWGDPIRLRHLYTSGPHGLSSCFLRIRADGVVDCARGQSAHSLLEIKAVALRTVAIKGVHSVRYLCMGADGKMQGLLQYSEEDCAFEEEIRPDGYNVYRSEKHRLPVSLSSAKQRQLYKNRGFLPLSHFLPMLPMVPEEPEDLRGHLESDMFSSPLETDSMDPFGLVTGLEAVRSPSFEK.

An N-terminal signal peptide occupies residues 1 to 24; that stretch reads MRSGCVVVHVWILAGLWLAVAGRP. Disulfide bonds link Cys-58-Cys-70 and Cys-102-Cys-120.

It belongs to the heparin-binding growth factors family. In terms of assembly, interacts with FGFR1, FGFR2, FGFR3 and FGFR4. Affinity between fibroblast growth factors (FGFs) and their receptors is increased by KL, KLB and heparan sulfate glycosaminoglycans that function as coreceptors. Interacts with KL; this interaction is direct. Interacts with KLB; this interaction is direct. Interacts with FGFR4 in the presence of heparin, KL or KLB. Interacts with MALRD1. In terms of tissue distribution, expressed in fetal brain, cartilage, retina, and adult gall bladder.

It localises to the secreted. In terms of biological role, involved in the suppression of bile acid biosynthesis through down-regulation of CYP7A1 expression, following positive regulation of the JNK and ERK1/2 cascades. Stimulates glucose uptake in adipocytes. Activity requires the presence of KLB and FGFR4. The chain is Fibroblast growth factor 19 (FGF19) from Homo sapiens (Human).